Reading from the N-terminus, the 121-residue chain is UPF0738 protein BLi01253/BL05110 (121 aa).

Belongs to the UPF0738 family.

The polypeptide is UPF0738 protein BLi01253/BL05110 (Bacillus licheniformis (strain ATCC 14580 / DSM 13 / JCM 2505 / CCUG 7422 / NBRC 12200 / NCIMB 9375 / NCTC 10341 / NRRL NRS-1264 / Gibson 46)).